The following is a 128-amino-acid chain: Large ribosomal subunit protein bL17 (128 aa).

It belongs to the bacterial ribosomal protein bL17 family. As to quaternary structure, part of the 50S ribosomal subunit. Contacts protein L32.

This Hydrogenovibrio crunogenus (strain DSM 25203 / XCL-2) (Thiomicrospira crunogena) protein is Large ribosomal subunit protein bL17.